The primary structure comprises 345 residues: Glycerol-3-phosphate dehydrogenase [NAD(P)+] (345 aa).

The NADPH site is built by Ser23, Tyr24, His44, and Lys118. Positions 118, 147, and 149 each coordinate sn-glycerol 3-phosphate. Position 151 (Ala151) interacts with NADPH. Residues Lys203, Asp256, Ser266, Arg267, and Asn268 each contribute to the sn-glycerol 3-phosphate site. The active-site Proton acceptor is the Lys203. NADPH is bound at residue Arg267. NADPH-binding residues include Val291 and Glu293.

The protein belongs to the NAD-dependent glycerol-3-phosphate dehydrogenase family.

The protein resides in the cytoplasm. It catalyses the reaction sn-glycerol 3-phosphate + NAD(+) = dihydroxyacetone phosphate + NADH + H(+). The enzyme catalyses sn-glycerol 3-phosphate + NADP(+) = dihydroxyacetone phosphate + NADPH + H(+). It functions in the pathway membrane lipid metabolism; glycerophospholipid metabolism. Its function is as follows. Catalyzes the reduction of the glycolytic intermediate dihydroxyacetone phosphate (DHAP) to sn-glycerol 3-phosphate (G3P), the key precursor for phospholipid synthesis. This chain is Glycerol-3-phosphate dehydrogenase [NAD(P)+], found in Vibrio vulnificus (strain CMCP6).